Reading from the N-terminus, the 209-residue chain is uncharacterized protein (209 aa).

Positions 1 to 11 are enriched in basic and acidic residues; it reads MMRTNAGKETK. The disordered stretch occupies residues 1 to 20; the sequence is MMRTNAGKETKGYNPAPADS.

This is an uncharacterized protein from Caenorhabditis elegans.